The primary structure comprises 89 residues: Bombyxin B-2 (89 aa).

The first 19 residues, 1–19, serve as a signal peptide directing secretion; the sequence is MKTSVMFMLVFVISLMCSS. 3 disulfide bridges follow: Cys-29-Cys-75, Cys-41-Cys-88, and Cys-74-Cys-79. Residues 48–66 constitute a propeptide, c peptide like; the sequence is SGAQYAPYFWTRQYLGSRG.

The protein belongs to the insulin family. As to quaternary structure, heterodimer of a B chain and an A chain linked by two disulfide bonds.

The protein resides in the secreted. Its function is as follows. Brain peptide responsible for activation of prothoracic glands to produce ecdysone in insects. This is Bombyxin B-2 (BBXB2) from Bombyx mori (Silk moth).